Here is a 143-residue protein sequence, read N- to C-terminus: Large ribosomal subunit protein uL15 (143 aa).

The disordered stretch occupies residues 1–56; it reads MQLNSIKPAAGAKHAKRRVGRGIGSGLGKTAGRGHKGQKSRAGGYHKVGFEGGQMP. Over residues 21-31 the composition is skewed to gly residues; sequence RGIGSGLGKTA.

Belongs to the universal ribosomal protein uL15 family. As to quaternary structure, part of the 50S ribosomal subunit.

Functionally, binds to the 23S rRNA. The protein is Large ribosomal subunit protein uL15 of Verminephrobacter eiseniae (strain EF01-2).